The following is a 464-amino-acid chain: Cysteine--tRNA ligase (464 aa).

A Zn(2+)-binding site is contributed by Cys-30. A 'HIGH' region motif is present at residues 32–42; that stretch reads MTVYDYCHIGH. Zn(2+) contacts are provided by Cys-214, His-239, and Glu-243. The 'KMSKS' region signature appears at 271-275; the sequence is KMSKS. Lys-274 provides a ligand contact to ATP.

It belongs to the class-I aminoacyl-tRNA synthetase family. As to quaternary structure, monomer. Zn(2+) is required as a cofactor.

The protein resides in the cytoplasm. It catalyses the reaction tRNA(Cys) + L-cysteine + ATP = L-cysteinyl-tRNA(Cys) + AMP + diphosphate. In Janthinobacterium sp. (strain Marseille) (Minibacterium massiliensis), this protein is Cysteine--tRNA ligase.